Here is a 196-residue protein sequence, read N- to C-terminus: Homeobox protein ANF-1 (196 aa).

The homeobox DNA-binding region spans 119 to 178; sequence GRRPRTAFTRNQIEVLENVFKMNSYPGIDIREELARKLDLEEDRIQIWFQNRRAKLKRSH.

It belongs to the ANF homeobox family.

Its subcellular location is the nucleus. May be involved in the early patterning of the most anterior region of the main embryonic body axis. The chain is Homeobox protein ANF-1 from Gallus gallus (Chicken).